A 305-amino-acid chain; its full sequence is Probable alpha-L-glutamate ligase (305 aa).

The region spanning 119–301 (LQVLAAQHIP…IAGLIIDYLL (183 aa)) is the ATP-grasp domain. Residues lysine 155, 192 to 193 (DF), aspartate 201, and 225 to 227 (RAN) contribute to the ATP site. Positions 262, 274, and 276 each coordinate Mg(2+). Residues aspartate 262, glutamate 274, and asparagine 276 each coordinate Mn(2+).

It belongs to the RimK family. It depends on Mg(2+) as a cofactor. The cofactor is Mn(2+).

The polypeptide is Probable alpha-L-glutamate ligase (Haemophilus ducreyi (strain 35000HP / ATCC 700724)).